Reading from the N-terminus, the 150-residue chain is S-protein homolog 3 (150 aa).

An N-terminal signal peptide occupies residues 1 to 23 (MKNILKTQVHVVVIYLLIKIAFS). N-linked (GlcNAc...) asparagine glycosylation is found at asparagine 32 and asparagine 70.

This sequence belongs to the plant self-incompatibility (S1) protein family.

It is found in the secreted. This is S-protein homolog 3 from Arabidopsis thaliana (Mouse-ear cress).